The following is a 418-amino-acid chain: Gamma-glutamyl phosphate reductase (418 aa).

Belongs to the gamma-glutamyl phosphate reductase family.

Its subcellular location is the cytoplasm. The catalysed reaction is L-glutamate 5-semialdehyde + phosphate + NADP(+) = L-glutamyl 5-phosphate + NADPH + H(+). It participates in amino-acid biosynthesis; L-proline biosynthesis; L-glutamate 5-semialdehyde from L-glutamate: step 2/2. Functionally, catalyzes the NADPH-dependent reduction of L-glutamate 5-phosphate into L-glutamate 5-semialdehyde and phosphate. The product spontaneously undergoes cyclization to form 1-pyrroline-5-carboxylate. This Clostridium kluyveri (strain NBRC 12016) protein is Gamma-glutamyl phosphate reductase.